Consider the following 114-residue polypeptide: UPF0102 protein HPSH_02690 (114 aa).

It belongs to the UPF0102 family.

This chain is UPF0102 protein HPSH_02690, found in Helicobacter pylori (strain Shi470).